Here is a 212-residue protein sequence, read N- to C-terminus: MSKGFLVSLEGPEGAGKTSVLEALLPILKEKGVEVLTTREPGGVLIGEKIREVILDPSHTQMDAKTELLLYIASRRQHLVEKVLPALEAGKLVIMDRFIDSSVAYQGFGRGLDIEAIDWLNQFATDGLKPDLTLYFDIEVEEGLARIAANSDREVNRLDLEGLDLHKKVRQGYLSLLDKEGNRIVKIDASLPLEQVVETTKAVLFDGMGLAK.

11-18 (GPEGAGKT) is a binding site for ATP.

Belongs to the thymidylate kinase family.

The enzyme catalyses dTMP + ATP = dTDP + ADP. In terms of biological role, phosphorylation of dTMP to form dTDP in both de novo and salvage pathways of dTTP synthesis. This chain is Thymidylate kinase, found in Streptococcus pneumoniae (strain ATCC 700669 / Spain 23F-1).